The primary structure comprises 514 residues: Glycosyltransferase-like At3g57200 (514 aa).

Positions 1–23 (MAGLYSSSSSSKPTLSSSPSSSS) are disordered. A signal peptide spans 1–39 (MAGLYSSSSSSKPTLSSSPSSSSSSRLFLLVTLLPLSLA). Residues Asn156, Asn187, Asn251, and Asn460 are each glycosylated (N-linked (GlcNAc...) asparagine). The segment at 457-514 (PSKNSSTADSTSGITRESSQETGKRRVLEFHLDVDGESQASAVPPQSPPGLEATQMEL) is disordered. Over residues 458–473 (SKNSSTADSTSGITRE) the composition is skewed to polar residues. The span at 474-490 (SSQETGKRRVLEFHLDV) shows a compositional bias: basic and acidic residues.

The protein belongs to the glycosyltransferase 25 family.

It localises to the secreted. The protein resides in the cell wall. The protein localises to the cytoplasm. Its subcellular location is the cell membrane. Its function is as follows. Involved in the coordination between cell elongation and cellulose synthesis by promoting the expression of genes involved in cell elongation and cellulose synthesis. Acts as a regulator of plasmodesmatal permeability. Maybe a glycosyltransferase. The polypeptide is Glycosyltransferase-like At3g57200 (Arabidopsis thaliana (Mouse-ear cress)).